We begin with the raw amino-acid sequence, 65 residues long: White colony protein WHS11 (65 aa).

Positions 1–17 (MSDLGRKDIGDKIESKL) are enriched in basic and acidic residues. The segment at 1–32 (MSDLGRKDIGDKIESKLTPDSQKSTPEQFKDK) is disordered. Residues 18-27 (TPDSQKSTPE) show a composition bias toward polar residues.

This sequence to yeast HSP12/GLP1 and S.pombe hsp9.

The polypeptide is White colony protein WHS11 (WHS11) (Candida albicans (strain WO-1) (Yeast)).